An 842-amino-acid polypeptide reads, in one-letter code: Squamosa promoter-binding-like protein 9 (842 aa).

Gly residues predominate over residues 1-18 (MDAPGGGGGGGGGGGGVD). Disordered stretches follow at residues 1 to 22 (MDAPGGGGGGGGGGGGVDAGEP), 59 to 97 (ALLPPAPSPQPAEAEAEAAGPASLPSSMQAEGSKRRVRK), and 140 to 168 (RKKPKGAGRGSGAAVGGSGGGASRGTPAE). Over residues 69–85 (PAEAEAEAAGPASLPSS) the composition is skewed to low complexity. The span at 146–162 (AGRGSGAAVGGSGGGAS) shows a compositional bias: gly residues. Residues 168–245 (EMKCQVPGCE…ERHNKRRRRK (78 aa)) form an SBP-type; atypical zinc finger. Positions 171, 176, 193, 196, 212, 215, 219, and 231 each coordinate Zn(2+). The Bipartite nuclear localization signal signature appears at 228-244 (KRSCRRKLERHNKRRRR). The segment covering 236 to 246 (ERHNKRRRRKP) has biased composition (basic residues). The interval 236 to 256 (ERHNKRRRRKPDSKGILEKDI) is disordered.

Ubiquitous.

It localises to the nucleus. Trans-acting factor that binds specifically to the consensus nucleotide sequence 5'-TNCGTACAA-3'. This Oryza sativa subsp. japonica (Rice) protein is Squamosa promoter-binding-like protein 9 (SPL9).